The chain runs to 550 residues: Glucose-6-phosphate isomerase (550 aa).

Glu356 acts as the Proton donor in catalysis. Residues His387 and Lys515 contribute to the active site.

It belongs to the GPI family.

Its subcellular location is the cytoplasm. It catalyses the reaction alpha-D-glucose 6-phosphate = beta-D-fructose 6-phosphate. Its pathway is carbohydrate biosynthesis; gluconeogenesis. The protein operates within carbohydrate degradation; glycolysis; D-glyceraldehyde 3-phosphate and glycerone phosphate from D-glucose: step 2/4. Its function is as follows. Catalyzes the reversible isomerization of glucose-6-phosphate to fructose-6-phosphate. This Aliivibrio salmonicida (strain LFI1238) (Vibrio salmonicida (strain LFI1238)) protein is Glucose-6-phosphate isomerase.